A 339-amino-acid chain; its full sequence is Large ribosomal subunit protein uL11m (339 aa).

This sequence belongs to the universal ribosomal protein uL11 family.

The protein localises to the mitochondrion. This Acanthamoeba castellanii (Amoeba) protein is Large ribosomal subunit protein uL11m (RPL11).